Here is a 281-residue protein sequence, read N- to C-terminus: MSNSNIHPTSIIAEGAKLGKNVKVGPYCIIGPEVILHDNVELKSHVVIEGITEIGESTVIYPFASIGQPPQILKYNNERSNTIIGSNNIIREYVTVQAGSQGGGMITRIGNNNLFMVGVHIGHDCKIGNNVVFANYVSLAGHIEVEDYVIIGGLSAVHQYARIGKHSMIGGLSPVGADVIPFGLASGKRAVLEGLNLVGMNRKGFDKAESLNALKIVQEIFLGEGNFADRIKQAQEKYKNNTIVMQIIDFLEHGSNRSFCSFEKTMSLRGELQSNLTKQPN.

Belongs to the transferase hexapeptide repeat family. LpxA subfamily. In terms of assembly, homotrimer.

The protein localises to the cytoplasm. The catalysed reaction is a (3R)-hydroxyacyl-[ACP] + UDP-N-acetyl-alpha-D-glucosamine = a UDP-3-O-[(3R)-3-hydroxyacyl]-N-acetyl-alpha-D-glucosamine + holo-[ACP]. Its pathway is glycolipid biosynthesis; lipid IV(A) biosynthesis; lipid IV(A) from (3R)-3-hydroxytetradecanoyl-[acyl-carrier-protein] and UDP-N-acetyl-alpha-D-glucosamine: step 1/6. In terms of biological role, involved in the biosynthesis of lipid A, a phosphorylated glycolipid that anchors the lipopolysaccharide to the outer membrane of the cell. The polypeptide is Acyl-[acyl-carrier-protein]--UDP-N-acetylglucosamine O-acyltransferase (Rickettsia bellii (strain OSU 85-389)).